We begin with the raw amino-acid sequence, 437 residues long: Xylose isomerase (437 aa).

Catalysis depends on residues histidine 101 and aspartate 104. Residues glutamate 232, glutamate 268, histidine 271, aspartate 296, aspartate 307, aspartate 309, and aspartate 339 each contribute to the Mg(2+) site.

The protein belongs to the xylose isomerase family. As to quaternary structure, homotetramer. The cofactor is Mg(2+).

The protein localises to the cytoplasm. The enzyme catalyses alpha-D-xylose = alpha-D-xylulofuranose. The chain is Xylose isomerase from Mannheimia succiniciproducens (strain KCTC 0769BP / MBEL55E).